Consider the following 150-residue polypeptide: Early 4 ORF6/7 control protein (150 aa).

The disordered stretch occupies residues 1–31 (MTTSGVPFGMTLRPTRSRLSRRTPYSRDRLP). The Nuclear localization signal signature appears at 1–58 (MTTSGVPFGMTLRPTRSRLSRRTPYSRDRLPPFETETRATILEDHPLLPECNTLTMHN).

The protein belongs to the adenoviridae E4-orf6/7 family. Interacts with host E2F proteins.

Its subcellular location is the host nucleus. Modulates viral and host transcriptional activity to promote viral genome replication. Stimulates viral E2a promoter activity by binding and inducing dimerization of host E2F. During viral infection E1A protein binds to cellular retinablastoma (RB) family members and dissociates these repressors from a complex with E2F proteins. Free E2F is then bound to E4orf6/7 which leads to transactivation of viral E2 promoter, and cellular promoters such as E2F-1 promoter. Activation of cellular E2F targets promote cell cycle S phase and thereby possibly favorises viral DNA replication process. The chain is Early 4 ORF6/7 control protein from Human adenovirus C serotype 2 (HAdV-2).